A 445-amino-acid polypeptide reads, in one-letter code: FAS-associated factor 2 (445 aa).

Residue alanine 2 is modified to N-acetylalanine. The UBA domain occupies 12–48; it reads EQTEKLLQFQDLTGIESMDQCRHTLEQHNWNIEAAVQ. Lysine 167 carries the post-translational modification N6-acetyllysine. Residues 275–350 are a coiled coil; sequence SERLEREERN…EEKERKLECL (76 aa). The segment at 299–361 is disordered; the sequence is ASLRADQEKE…PEPSPDDPES (63 aa). A compositionally biased stretch (basic and acidic residues) spans 303 to 348; that stretch reads ADQEKERKKREERERKRRKEEEVQQQKLAEERRRRNLQEEKERKLE. The UBX domain maps to 357-439; the sequence is DDPESVKIIF…GLSHTEVLFV (83 aa).

Identified in a complex that contains SEL1L, OS9, FAF2/UBXD8, UBE2J1/UBC6E and AUP1. Interacts with YOD1. Interacts (via N-terminus) with UBQLN2 (via C-terminus). Interacts with PNPLA2 and UBAC2. Interacts with ZFAND2B; probably through VCP. Interacts with LMBR1L.

The protein localises to the cytoplasm. Its subcellular location is the lipid droplet. The protein resides in the endoplasmic reticulum. Functionally, plays an important role in endoplasmic reticulum-associated degradation (ERAD) that mediates ubiquitin-dependent degradation of misfolded endoplasmic reticulum proteins. By controlling the steady-state expression of the IGF1R receptor, indirectly regulates the insulin-like growth factor receptor signaling pathway. Involved in inhibition of lipid droplet degradation by binding to phospholipase PNPL2 and inhibiting its activity by promoting dissociation of PNPL2 from its endogenous activator, ABHD5 which inhibits the rate of triacylglycerol hydrolysis. Involved in stress granule disassembly: associates with ubiquitinated G3BP1 in response to heat shock, thereby promoting interaction between ubiquitinated G3BP1 and VCP, followed by G3BP1 extraction from stress granules and stress granule disassembly. The chain is FAS-associated factor 2 (FAF2) from Bos taurus (Bovine).